The sequence spans 389 residues: Tubby-like F-box protein 11 (389 aa).

Residues 36–82 form the F-box domain; the sequence is DYRWSEIPEELLREILIRVEAADGGGWPSRRSVVACAGVCRGWRLLM. Positions 250-289 are disordered; it reads STMEPQGVASEPSEFPLLGTRSTLSRSQSKPLRSSSSHLK. The span at 273-286 shows a compositional bias: low complexity; sequence LSRSQSKPLRSSSS.

This sequence belongs to the TUB family. Ubiquitous.

The sequence is that of Tubby-like F-box protein 11 from Arabidopsis thaliana (Mouse-ear cress).